Reading from the N-terminus, the 249-residue chain is Undecaprenyl-diphosphatase (249 aa).

Helical transmembrane passes span 11-31, 35-55, 80-100, 101-121, 135-155, 180-200, 202-222, and 226-246; these read GLTE…TAIF, PDVG…LIFV, LVLS…FIES, VFSS…LMLL, IPYF…LPGI, FLMS…NVAF, TEQI…LYLV, and VIGG…FFVL.

This sequence belongs to the UppP family.

The protein localises to the cell membrane. The catalysed reaction is di-trans,octa-cis-undecaprenyl diphosphate + H2O = di-trans,octa-cis-undecaprenyl phosphate + phosphate + H(+). Catalyzes the dephosphorylation of undecaprenyl diphosphate (UPP). This Methanococcus maripaludis (strain C7 / ATCC BAA-1331) protein is Undecaprenyl-diphosphatase.